Consider the following 225-residue polypeptide: NAD(P)H-quinone oxidoreductase subunit K, chloroplastic (225 aa).

4 residues coordinate [4Fe-4S] cluster: Cys-43, Cys-44, Cys-108, and Cys-139.

The protein belongs to the complex I 20 kDa subunit family. As to quaternary structure, NDH is composed of at least 16 different subunits, 5 of which are encoded in the nucleus. [4Fe-4S] cluster is required as a cofactor.

The protein resides in the plastid. The protein localises to the chloroplast thylakoid membrane. The enzyme catalyses a plastoquinone + NADH + (n+1) H(+)(in) = a plastoquinol + NAD(+) + n H(+)(out). It catalyses the reaction a plastoquinone + NADPH + (n+1) H(+)(in) = a plastoquinol + NADP(+) + n H(+)(out). Its function is as follows. NDH shuttles electrons from NAD(P)H:plastoquinone, via FMN and iron-sulfur (Fe-S) centers, to quinones in the photosynthetic chain and possibly in a chloroplast respiratory chain. The immediate electron acceptor for the enzyme in this species is believed to be plastoquinone. Couples the redox reaction to proton translocation, and thus conserves the redox energy in a proton gradient. The sequence is that of NAD(P)H-quinone oxidoreductase subunit K, chloroplastic from Oenothera argillicola (Appalachian evening primrose).